A 167-amino-acid polypeptide reads, in one-letter code: Phospholipase A2 inhibitor alpha-like protein (167 aa).

Residues 1–19 (MQLILLSSLLLLGLSLANG) form the signal peptide. Residues 62–163 (GSERLYVTNK…CDEDLLVVCE (102 aa)) form the C-type lectin domain. Disulfide bonds link C83–C162 and C140–C154.

Belongs to the alpha-type phospholipase A2 inhibitor family. In terms of assembly, homotrimer.

Its subcellular location is the secreted. Its function is as follows. Has no PLA2 inhibitory activity. The polypeptide is Phospholipase A2 inhibitor alpha-like protein (Elaphe climacophora (Japanese rat snake)).